The primary structure comprises 395 residues: Phosphoribulokinase, chloroplastic (395 aa).

The transit peptide at methionine 1 to cysteine 46 directs the protein to the chloroplast. Cysteines 61 and 100 form a disulfide.

It belongs to the phosphoribulokinase family.

Its subcellular location is the plastid. The protein localises to the chloroplast. It catalyses the reaction D-ribulose 5-phosphate + ATP = D-ribulose 1,5-bisphosphate + ADP + H(+). It functions in the pathway carbohydrate biosynthesis; Calvin cycle. With respect to regulation, light regulated via thioredoxin by reversible oxidation/reduction of sulfhydryl/disulfide groups. The sequence is that of Phosphoribulokinase, chloroplastic from Arabidopsis thaliana (Mouse-ear cress).